A 209-amino-acid chain; its full sequence is Uridine kinase (209 aa).

12 to 19 lines the ATP pocket; that stretch reads GGSGGGKT.

Belongs to the uridine kinase family.

Its subcellular location is the cytoplasm. It catalyses the reaction uridine + ATP = UMP + ADP + H(+). The catalysed reaction is cytidine + ATP = CMP + ADP + H(+). It functions in the pathway pyrimidine metabolism; CTP biosynthesis via salvage pathway; CTP from cytidine: step 1/3. Its pathway is pyrimidine metabolism; UMP biosynthesis via salvage pathway; UMP from uridine: step 1/1. This Streptococcus agalactiae serotype V (strain ATCC BAA-611 / 2603 V/R) protein is Uridine kinase.